The chain runs to 397 residues: Tryptophan synthase beta chain (397 aa).

N6-(pyridoxal phosphate)lysine is present on Lys-91.

This sequence belongs to the TrpB family. In terms of assembly, tetramer of two alpha and two beta chains. It depends on pyridoxal 5'-phosphate as a cofactor.

The catalysed reaction is (1S,2R)-1-C-(indol-3-yl)glycerol 3-phosphate + L-serine = D-glyceraldehyde 3-phosphate + L-tryptophan + H2O. It functions in the pathway amino-acid biosynthesis; L-tryptophan biosynthesis; L-tryptophan from chorismate: step 5/5. The beta subunit is responsible for the synthesis of L-tryptophan from indole and L-serine. The protein is Tryptophan synthase beta chain of Bacillus anthracis (strain A0248).